A 140-amino-acid chain; its full sequence is Transcription antitermination protein NusB (140 aa).

Belongs to the NusB family.

Functionally, involved in transcription antitermination. Required for transcription of ribosomal RNA (rRNA) genes. Binds specifically to the boxA antiterminator sequence of the ribosomal RNA (rrn) operons. The protein is Transcription antitermination protein NusB of Pseudothermotoga lettingae (strain ATCC BAA-301 / DSM 14385 / NBRC 107922 / TMO) (Thermotoga lettingae).